The chain runs to 136 residues: MGKDTIADLLTSIRNADMNKKGTVRVVSTNITENIVKILLREGFIESVRKHQESNRYFLVSTLRHQRRKTRKGIYRTRTFLKRISRPGLRIYANYQGIPKVLGGMGIAILSTSRGIMTDREARLNRIGGEVLCYIW.

The protein belongs to the universal ribosomal protein uS8 family. As to quaternary structure, part of the 30S ribosomal subunit.

It is found in the plastid. It localises to the chloroplast. Its function is as follows. One of the primary rRNA binding proteins, it binds directly to 16S rRNA central domain where it helps coordinate assembly of the platform of the 30S subunit. This is Small ribosomal subunit protein uS8c (rps8) from Saccharum officinarum (Sugarcane).